Consider the following 358-residue polypeptide: UPF0575 protein C19orf67 (358 aa).

The tract at residues 1-84 is disordered; that stretch reads MATEQWFEGS…PGPAPPRLSL (84 aa). Composition is skewed to pro residues over residues 17-32 and 70-80; these read ETPP…PPCG and PLVPRPGPAPP.

Belongs to the UPF0575 family.

The protein is UPF0575 protein C19orf67 (C19orf67) of Homo sapiens (Human).